A 61-amino-acid polypeptide reads, in one-letter code: Large ribosomal subunit protein bL32 (61 aa).

Positions 1–22 (MAVPKKKTSRARRDRRRSHHAL) are enriched in basic residues. Residues 1–24 (MAVPKKKTSRARRDRRRSHHALRG) are disordered.

Belongs to the bacterial ribosomal protein bL32 family.

This Rubrobacter xylanophilus (strain DSM 9941 / JCM 11954 / NBRC 16129 / PRD-1) protein is Large ribosomal subunit protein bL32.